The primary structure comprises 542 residues: Pre-mRNA-splicing factor 38B (542 aa).

Polar residues predominate over residues 1-12 (MANNSPALTGNS). The interval 1–24 (MANNSPALTGNSQPQHQAAAAVVQ) is disordered. Position 2 is an N-acetylalanine (A2). S5 carries the post-translational modification Phosphoserine. Over residues 13–24 (QPQHQAAAAVVQ) the composition is skewed to low complexity. The residue at position 227 (K227) is an N6-acetyllysine. The segment at 232–542 (QIKTRPRKIK…KEHKNKDETV (311 aa)) is disordered. Over residues 243–255 (DGKEGVEEIDRHI) the composition is skewed to basic and acidic residues. Over residues 256-284 (ERRRSRSPRRSLSPRRSPRRSRSRSHHRD) the composition is skewed to basic residues. Residues S288, S290, S318, and S320 each carry the phosphoserine modification. Residues 291–327 (FDRELEREKERQRLEREAKEREKERRRSRSLDRGLDR) show a composition bias toward basic and acidic residues. Positions 292 to 323 (DRELEREKERQRLEREAKEREKERRRSRSLDR) form a coiled coil. Residues 328 to 344 (RRSRSRERHRSRSRSRD) show a composition bias toward basic residues. Basic and acidic residues predominate over residues 345 to 418 (RKGDRRDRDR…DRRHRDDKKE (74 aa)). Basic residues predominate over residues 419 to 448 (SKKKHSRSRSRERKHRSRSRSRNAGKRSRS). Position 446 is a phosphoserine (S446). Positions 449 to 466 (RSKDKASKHKNESKEKSN) are enriched in basic and acidic residues. Phosphoserine is present on residues S471, S473, and S479. Basic and acidic residues-rich tracts occupy residues 479–492 (SVEKRKREHSPSRE) and 499–522 (RSQDRSHKRDHDSKDQSDRQDHQR). S523, S525, and S530 each carry phosphoserine. Basic and acidic residues predominate over residues 530 to 542 (SQEKEHKNKDETV).

This sequence belongs to the PRP38 family.

It is found in the nucleus. May be required for pre-mRNA splicing. In Rattus norvegicus (Rat), this protein is Pre-mRNA-splicing factor 38B (Prpf38b).